Consider the following 485-residue polypeptide: Glutamyl-tRNA(Gln) amidotransferase subunit A (485 aa).

Catalysis depends on charge relay system residues K75 and S150. S174 acts as the Acyl-ester intermediate in catalysis.

Belongs to the amidase family. GatA subfamily. As to quaternary structure, heterotrimer of A, B and C subunits.

It catalyses the reaction L-glutamyl-tRNA(Gln) + L-glutamine + ATP + H2O = L-glutaminyl-tRNA(Gln) + L-glutamate + ADP + phosphate + H(+). In terms of biological role, allows the formation of correctly charged Gln-tRNA(Gln) through the transamidation of misacylated Glu-tRNA(Gln) in organisms which lack glutaminyl-tRNA synthetase. The reaction takes place in the presence of glutamine and ATP through an activated gamma-phospho-Glu-tRNA(Gln). This is Glutamyl-tRNA(Gln) amidotransferase subunit A from Picosynechococcus sp. (strain ATCC 27264 / PCC 7002 / PR-6) (Agmenellum quadruplicatum).